A 98-amino-acid polypeptide reads, in one-letter code: NADH-ubiquinone oxidoreductase chain 4L (98 aa).

A run of 3 helical transmembrane segments spans residues 1-21 (MALT…GLLM), 29-49 (SLLC…LTIL), and 61-81 (IILL…LVMV).

Belongs to the complex I subunit 4L family. Core subunit of respiratory chain NADH dehydrogenase (Complex I) which is composed of 45 different subunits.

It is found in the mitochondrion inner membrane. The catalysed reaction is a ubiquinone + NADH + 5 H(+)(in) = a ubiquinol + NAD(+) + 4 H(+)(out). In terms of biological role, core subunit of the mitochondrial membrane respiratory chain NADH dehydrogenase (Complex I) which catalyzes electron transfer from NADH through the respiratory chain, using ubiquinone as an electron acceptor. Part of the enzyme membrane arm which is embedded in the lipid bilayer and involved in proton translocation. The polypeptide is NADH-ubiquinone oxidoreductase chain 4L (MT-ND4L) (Pteropus dasymallus (Ryukyu flying fox)).